The following is a 520-amino-acid chain: L-cysteine:1D-myo-inositol 2-amino-2-deoxy-alpha-D-glucopyranoside ligase (520 aa).

Residue Cys48 participates in Zn(2+) binding. L-cysteinyl-5'-AMP is bound by residues 48-51, Thr63, and 86-88; these read CGIT and NVT. The 'HIGH' region motif lies at 50–60; it reads ITPYDSTHLGH. Residues 192-197 carry the 'ERGGDP' region motif; it reads ERGGDP. Trp232 contacts L-cysteinyl-5'-AMP. Position 236 (Cys236) interacts with Zn(2+). An L-cysteinyl-5'-AMP-binding site is contributed by 254–256; the sequence is GED. Position 261 (His261) interacts with Zn(2+). Ile288 contributes to the L-cysteinyl-5'-AMP binding site. Positions 294 to 298 match the 'KMSKS' region motif; sequence KMSKS.

It belongs to the class-I aminoacyl-tRNA synthetase family. MshC subfamily. As to quaternary structure, monomer. It depends on Zn(2+) as a cofactor.

It catalyses the reaction 1D-myo-inositol 2-amino-2-deoxy-alpha-D-glucopyranoside + L-cysteine + ATP = 1D-myo-inositol 2-(L-cysteinylamino)-2-deoxy-alpha-D-glucopyranoside + AMP + diphosphate + H(+). Catalyzes the ATP-dependent condensation of GlcN-Ins and L-cysteine to form L-Cys-GlcN-Ins. The sequence is that of L-cysteine:1D-myo-inositol 2-amino-2-deoxy-alpha-D-glucopyranoside ligase from Corynebacterium kroppenstedtii (strain DSM 44385 / JCM 11950 / CIP 105744 / CCUG 35717).